The following is an 8384-amino-acid chain: Mucin-19 (8384 aa).

The signal sequence occupies residues 1 to 21 (MKLILWYLVVALWCFFKDVEA). Disordered stretches follow at residues 33–197 (AASR…YGAG), 222–247 (SKAD…PDAG), 279–305 (GDTG…IDLG), and 332–467 (QEGF…PEAT). 2 stretches are compositionally biased toward low complexity: residues 35-48 (SRSG…SSSG) and 88-98 (GGFFNSSSSSG). Residues 169–184 (DKSRERWDAGNSRSED) are compositionally biased toward basic and acidic residues. Polar residues predominate over residues 187–197 (ADSTNTRYGAG). Residues 279–299 (GDTGISSKTVEGNQTSSSGGS) are compositionally biased toward polar residues. Low complexity predominate over residues 359 to 369 (GSDSSSSGDSS). Over residues 370–381 (ARNGFENSSGIS) the composition is skewed to polar residues. Low complexity-rich tracts occupy residues 424-435 (SDSGGNTWSSDS) and 443-452 (TSSSEYSTSG). 3 VWFD domains span residues 478 to 649 (GEIS…QHCN), 815 to 995 (GRCK…SSCI), and 1274 to 1447 (TICH…QECS). 8 disulfide bridges follow: cysteine 502-cysteine 648, cysteine 817-cysteine 952, cysteine 838-cysteine 994, cysteine 857-cysteine 865, cysteine 1276-cysteine 1411, cysteine 1298-cysteine 1446, cysteine 1307-cysteine 1408, and cysteine 1323-cysteine 1330. 27 disordered regions span residues 1680–1699 (TSSS…PFTT), 1732–2464 (AGTT…KSPG), 2484–2526 (LESE…TEGS), 2540–2827 (RPLD…MTGT), 2850–2917 (STVG…LGTI), 2984–3027 (VTTG…SGTT), 3075–3368 (GTTG…GKTG), 3386–3428 (TTRL…GKTG), 3585–3628 (ETTG…TNGL), 3667–3736 (GSSA…TGLP), 4105–4147 (TGSS…NGLS), 4187–4251 (SAGV…AEVT), 4315–4390 (GLSA…SARV), 4414–4455 (TGSS…TNGQ), 4510–4583 (TGTT…TGLP), 4790–4843 (TGTT…TGLP), 4895–4930 (SSAG…AGVT), 5130–5161 (TGTT…GVTG), 5429–5452 (VTGT…VTGK), 5464–5494 (GPSA…GTTG), 5880–5918 (GTSI…SAEM), 6069–6403 (TGKT…STES), 6440–6918 (GRAT…ETTK), 6953–7223 (GTSE…TGFK), 7250–7749 (SFST…SKTG), 7783–7975 (KNGS…EAGS), and 8020–8133 (SGRS…VSQP). 3 stretches are compositionally biased toward low complexity: residues 1732–1746 (AGTT…TGAA), 1772–1813 (PGEA…TTGP), and 1820–1833 (GATS…EGMS). Over residues 1835 to 1860 (VTGQSLGSTAGSDSEITAKTSFTGSS) the composition is skewed to polar residues. The segment covering 1868–1879 (PSPGSPGHFSGG) has biased composition (low complexity). Positions 1880–1905 (TTEWGNVATTGAAGENTSGALGSTEG) are enriched in polar residues. A compositionally biased stretch (low complexity) spans 1909-1921 (ATTSAGSGNTAGT). Residues 1950–1968 (GSSTPGEADIGNTSFGKSG) show a composition bias toward polar residues. Composition is skewed to low complexity over residues 1969-1983 (TPTV…SPVS) and 2013-2049 (GGKI…SGPS). A compositionally biased stretch (polar residues) spans 2055–2100 (NYGQSSEIPGTIKSSSDVSGTMGQSDTTSGPSVAVTRTSEQSSGVT). Composition is skewed to low complexity over residues 2132-2147 (TTGS…GPSS) and 2159-2170 (GSGTSGQSVTGS). Polar residues-rich tracts occupy residues 2171-2186 (RATG…TVSF) and 2209-2225 (GSGT…TTRL). Composition is skewed to low complexity over residues 2233-2246 (TESS…TTPS) and 2280-2313 (SGPS…TKPS). The segment at 2238–6086 (GVTGTTTPSA…GVTGTTGLSA (3849 aa)) is approximate repeats of G-V-T-G-T-T-G-P-S-A. Polar residues-rich tracts occupy residues 2316–2332 (RTGT…TTEP) and 2354–2372 (ATES…TTIP). The span at 2403–2419 (SSGGSGATRSSGGGMGT) shows a compositional bias: gly residues. The span at 2420-2441 (TGQSTARSETTGPLFGLTGTFG) shows a compositional bias: low complexity. Residues 2442 to 2460 (QSATVTGTSSNSAGVTTPE) show a composition bias toward polar residues. 3 stretches are compositionally biased toward low complexity: residues 2512–2526 (SAGE…TEGS), 2545–2571 (GSGT…TTRK), and 2578–2589 (TTGLSGLTGTSG). Polar residues-rich tracts occupy residues 2595-2610 (TGTS…TSEK) and 2638-2653 (TRPS…QSAR). Low complexity predominate over residues 2654–2681 (VTETVGASAGVTGTTGPSTEGSGATGPS). Polar residues-rich tracts occupy residues 2695–2748 (SGTT…TGTT) and 2755–2770 (TETT…TTGP). The span at 2787-2799 (ATRSSGGETETTG) shows a compositional bias: low complexity. Composition is skewed to polar residues over residues 2800-2827 (QSAV…MTGT), 2850-2859 (STVGLETTRP), and 2874-2892 (AQTT…QSAR). The segment covering 2894-2910 (TGASGPSVGVTGTTGPA) has biased composition (low complexity). Positions 2984–2998 (VTTGPSVTGVETTAK) are enriched in polar residues. The span at 2999 to 3027 (TTSGGLSTTISSVGGTGTTGQSPERSGTT) shows a compositional bias: low complexity. Residues 3099 to 3109 (PSITGSGTTRP) are compositionally biased toward polar residues. The span at 3114–3130 (SWTAGTSSGGHSTTSPS) shows a compositional bias: low complexity. The span at 3131–3159 (VRGTETTGQSAAESVTTGPVTGYTETSGP) shows a compositional bias: polar residues. The segment covering 3172-3188 (TVTQTTGSSAAVSGTTV) has biased composition (low complexity). Polar residues predominate over residues 3189–3224 (QSLTVSGTTRPSSGQTEITGSSVKESGTTESSAVRS). Over residues 3225–3277 (GTTGPTAGVTGTNGPSSAGVTGITGSSPGVTGTTGSSPGVTGTTGSSARSGTS) the composition is skewed to low complexity. Composition is skewed to polar residues over residues 3303–3317 (ITGT…TGTT) and 3324–3362 (TGTT…SSAG). Low complexity predominate over residues 3390–3417 (SAGVTGTTGPSPGVTGTTGTPAGVTGTT). 2 stretches are compositionally biased toward polar residues: residues 3702 to 3728 (VTGT…TTGP) and 4105 to 4116 (TGSSARSGTSIP). Positions 4117-4126 (SVGETGTTRT) are enriched in low complexity. The span at 4320 to 4346 (VTGTTRPSAGVTGTTGQSAEVTGTTEP) shows a compositional bias: polar residues. Composition is skewed to low complexity over residues 4347–4385 (SAGL…GTTG) and 4414–4426 (TGSS…STPS). Composition is skewed to low complexity over residues 5469–5494 (VTGT…GTTG) and 5889–5903 (TGTT…TTTG). Polar residues-rich tracts occupy residues 5908-5918 (ITGTNGLSAEM), 6071-6103 (KTRS…TTKT), and 6111-6121 (TRPSAGITATT). Residues 6156–6168 (TTTGTTGVTTGTT) show a composition bias toward low complexity. Composition is skewed to polar residues over residues 6217–6248 (EVST…TATT) and 6257–6275 (APGS…SAST). The segment covering 6284-6295 (TGSTRGVRTTGS) has biased composition (low complexity). Composition is skewed to polar residues over residues 6303 to 6323 (GEFS…TTLT) and 6336 to 6346 (ESTTSLPQSAK). Residues 6378 to 6389 (SGTTISSGGSHT) are compositionally biased toward low complexity. 2 stretches are compositionally biased toward polar residues: residues 6440–6457 (GRAT…TSQA) and 6470–6503 (TTIT…TTYI). The span at 6507–6523 (GTTRGGLATATTGAFSG) shows a compositional bias: low complexity. The segment covering 6560–6571 (TTFTSGGSHTEA) has biased composition (polar residues). Residues 6581 to 6597 (TGTESRAATTRAAPGTT) show a composition bias toward low complexity. Residues 6599–6608 (VPGSSNTGAT) are compositionally biased toward polar residues. A compositionally biased stretch (low complexity) spans 6612-6628 (GGSATTRGRITTATTGA). Composition is skewed to polar residues over residues 6669-6680 (RITSGGSYTATT) and 6689-6698 (APGSSNTGAT). Residues 6707 to 6718 (TRGRITTATTGA) show a composition bias toward low complexity. Polar residues predominate over residues 6752–6766 (TTLTGDRSSTGSESR). Over residues 6767–6781 (TATTGVAPGTTVAPG) the composition is skewed to low complexity. The span at 6794 to 6817 (SGTTNIGRATGATTSIVGSDTSQA) shows a compositional bias: polar residues. The segment covering 6827–6842 (SPGASSTSQSSRPGTS) has biased composition (low complexity). The segment covering 6843 to 6875 (VTPDSSASESETVTTKEFSGTTAISRTSHTGTP) has biased composition (polar residues). A compositionally biased stretch (low complexity) spans 6887–6901 (TATTGVAPGTTVAPG). Composition is skewed to polar residues over residues 6902-6911 (SSNTEATTSV) and 6953-6964 (GTSEVAPSTTVA). Residues 6966–6994 (GSFSTAATTSPGASGTTGVTTTTKTTTSL) show a composition bias toward low complexity. A compositionally biased stretch (polar residues) spans 7006-7041 (SATTGAPGSRTGTAGVPSATTVSPGSSNSEATTSVG). A compositionally biased stretch (low complexity) spans 7045-7074 (KTGAETITEATTSTEGTGTSGTGFKTGTSE). Residues 7085–7094 (SFSTAATTSP) show a composition bias toward polar residues. The span at 7095-7112 (GASGMTGVTTTTKTTTSL) shows a compositional bias: low complexity. The segment covering 7143 to 7158 (TRVTPGSSNSEATTSV) has biased composition (polar residues). Composition is skewed to low complexity over residues 7201–7215 (SGSS…TEGT) and 7250–7276 (SFST…TTSL). Polar residues predominate over residues 7293-7311 (SGTTVAPGSSNSEATTSVG). Residues 7379–7397 (TTSTKGTGTSGTGFKTGTS) are compositionally biased toward low complexity. The segment covering 7403-7421 (TTVSPGSFSTATISPGASR) has biased composition (polar residues). The segment covering 7422–7435 (TTGAAPAAETTTSL) has biased composition (low complexity). Polar residues predominate over residues 7465-7483 (SATTIAPGSSNSEATTSLG). The segment covering 7525–7537 (PLGGASGTSGGYV) has biased composition (gly residues). Composition is skewed to polar residues over residues 7544–7557 (PTTS…SRTI) and 7571–7596 (AGTS…TSPG). The segment covering 7600-7613 (MTGVRTTSKTTTSL) has biased composition (low complexity). 2 stretches are compositionally biased toward polar residues: residues 7642-7669 (SSRT…SGTG) and 7698-7708 (SFSTAATTSPG). Positions 7715 to 7732 (TGPTAETTTFLGGSSTTG) are enriched in low complexity. The segment covering 7783–7811 (KNGSMTTALGSQLSSSQTVIPGSSGTISH) has biased composition (polar residues). Residues 7812–7828 (TTVAPGSSVTGTTTGAS) show a composition bias toward low complexity. Polar residues predominate over residues 7830 to 7851 (DQVTGSKTGTTGVALSTTVAPG). Residues 7852 to 7861 (SSSTEATTST) show a composition bias toward low complexity. The segment covering 7862-7891 (GVHRTTVVGQKTGATTRGSAKQGTRSTIEA) has biased composition (polar residues). Low complexity predominate over residues 7892–7917 (TTSFRGTGTTGSGMNTGTTGVVSGNT). Residues 7918-7934 (ISPSSFNTEATSGTSER) are compositionally biased toward polar residues. Residues 7938–7952 (GSEIGTTGIVSGTTV) are compositionally biased toward low complexity. Polar residues-rich tracts occupy residues 7953 to 7965 (APGS…TTSL), 8020 to 8040 (SGRS…SGTT), 8048 to 8081 (TGNT…SISG), and 8110 to 8120 (ETGVQTGSTLV). Residues 8159-8225 (PVCHGPLGEE…DTCCEIGYCE (67 aa)) enclose the VWFC domain. Cystine bridges form between cysteine 8288–cysteine 8339, cysteine 8306–cysteine 8353, cysteine 8315–cysteine 8369, and cysteine 8319–cysteine 8371. A CTCK domain is found at 8288 to 8376 (CKNNCRSSLV…TTCSCLDICQ (89 aa)).

Expressed corneal epithelial cells, conjunctival goblet and epithelial cells and lacrimal gland cells (at protein level). Expressed by mucous cells of the submandibular gland and submucosal gland of the trachea. Expressed by middle ear epithelial cells.

It localises to the secreted. In terms of biological role, may function in ocular mucus homeostasis. This is Mucin-19 (MUC19) from Homo sapiens (Human).